The primary structure comprises 198 residues: Peptidyl-tRNA hydrolase (198 aa).

A tRNA-binding site is contributed by Y14. The Proton acceptor role is filled by H19. Positions 64, 66, and 112 each coordinate tRNA.

The protein belongs to the PTH family. Monomer.

The protein localises to the cytoplasm. The enzyme catalyses an N-acyl-L-alpha-aminoacyl-tRNA + H2O = an N-acyl-L-amino acid + a tRNA + H(+). Its function is as follows. Hydrolyzes ribosome-free peptidyl-tRNAs (with 1 or more amino acids incorporated), which drop off the ribosome during protein synthesis, or as a result of ribosome stalling. Functionally, catalyzes the release of premature peptidyl moieties from peptidyl-tRNA molecules trapped in stalled 50S ribosomal subunits, and thus maintains levels of free tRNAs and 50S ribosomes. In Beijerinckia indica subsp. indica (strain ATCC 9039 / DSM 1715 / NCIMB 8712), this protein is Peptidyl-tRNA hydrolase.